The chain runs to 594 residues: Golgi-associated RAB2 interactor protein 4 (594 aa).

The tract at residues 390–525 (AAGLPVSTRQ…SSGSSKRLGR (136 aa)) is disordered. Positions 396 to 406 (STRQSKSSLSG) are enriched in polar residues. Basic and acidic residues-rich tracts occupy residues 408–433 (HGRE…DKAL), 442–455 (TGES…DKIA), and 468–477 (ASRDGKKEKG). The span at 510 to 521 (RSSSTTSSGSSK) shows a compositional bias: low complexity.

The protein belongs to the GARIN family. Interacts (via N-terminus) with RAB2B (in GTP-bound form).

The protein resides in the golgi apparatus. Its function is as follows. RAB2B effector protein required for the compacted Golgi morphology, probably through interaction with small GTPase RAB2B. This Macaca fascicularis (Crab-eating macaque) protein is Golgi-associated RAB2 interactor protein 4 (GARIN4).